The primary structure comprises 171 residues: Small ribosomal subunit protein mS25 (171 aa).

Belongs to the mitochondrion-specific ribosomal protein mS25 family. In terms of assembly, component of the mitochondrial ribosome small subunit (28S) which comprises a 12S rRNA and about 30 distinct proteins.

The protein resides in the mitochondrion. The chain is Small ribosomal subunit protein mS25 (Mrps25) from Rattus norvegicus (Rat).